We begin with the raw amino-acid sequence, 461 residues long: Argininosuccinate lyase (461 aa).

The protein belongs to the lyase 1 family. Argininosuccinate lyase subfamily.

It localises to the cytoplasm. The enzyme catalyses 2-(N(omega)-L-arginino)succinate = fumarate + L-arginine. Its pathway is amino-acid biosynthesis; L-arginine biosynthesis; L-arginine from L-ornithine and carbamoyl phosphate: step 3/3. This Aeromonas hydrophila subsp. hydrophila (strain ATCC 7966 / DSM 30187 / BCRC 13018 / CCUG 14551 / JCM 1027 / KCTC 2358 / NCIMB 9240 / NCTC 8049) protein is Argininosuccinate lyase.